We begin with the raw amino-acid sequence, 367 residues long: Peptide chain release factor 2 (367 aa).

Gln-249 carries the N5-methylglutamine modification.

Belongs to the prokaryotic/mitochondrial release factor family. Methylated by PrmC. Methylation increases the termination efficiency of RF2.

The protein localises to the cytoplasm. Functionally, peptide chain release factor 2 directs the termination of translation in response to the peptide chain termination codons UGA and UAA. The polypeptide is Peptide chain release factor 2 (Thermotoga sp. (strain RQ2)).